The primary structure comprises 146 residues: Transcriptional regulator MraZ (146 aa).

2 SpoVT-AbrB domains span residues 5–47 (EYYH…TITD) and 76–119 (SIQV…AKEK).

The protein belongs to the MraZ family. Forms oligomers.

Its subcellular location is the cytoplasm. The protein localises to the nucleoid. The sequence is that of Transcriptional regulator MraZ from Dictyoglomus thermophilum (strain ATCC 35947 / DSM 3960 / H-6-12).